Here is a 409-residue protein sequence, read N- to C-terminus: Chaetoglobosin A biosynthesis cluster protein C (409 aa).

One can recognise an HTH CENPB-type domain in the interval 51 to 120; sequence DLPANSRKLT…VKRQPQLRTR (70 aa). Residues 84-113 constitute a DNA-binding region (H-T-H motif); it reads RGVEDMANHLLRERDAPPVGKLWAHNFVKR. 2 disordered regions span residues 243–269 and 320–350; these read PTHPDSRPGTAQPWASKTPYNAQETRS and ANEPLSKRRKAKRTRIQLGGPLTVQDAQDPL. Positions 255–269 are enriched in polar residues; the sequence is PWASKTPYNAQETRS.

The protein localises to the nucleus. Functionally, part of the gene cluster that mediates the biosynthesis of chaetoglobosin A which has a unique inhibitory activity against actin polymerization in mammalian cells. Chaetoglobosin A and its intermediates are involved in the morphological differentiation of C.globosum. The first step of the pathway is the synthesis of prochaetoglobosin I via condensation of one acetyl-CoA, 8 malonyl-CoA, and a L-tryptophan molecule by the PKS-NRPS hybrid synthetase cheA, followed by reduction of backbone double bond to install desired geometry by the enoyl reductase cheB. Further multiple oxidation steps performed by the cytochrome P450 monooxygenases cheE and cheG, as well as by the FAD-linked oxidoreductase cheF, lead to the formation of chaetoglobosin A. Depending on the order of action of these reductases, distinct intermediates can be identified. Within the pathway, the cytochrome P450 monooxygenase cheE catalyzes a stereospecific epoxidation on prochaetoglobosin I, cytoglobosin D, and chaetoglobosin J intermediates. The FAD-linked oxidoreductase cheF performs dehydrogenation of the C-20 hydroxyl groups in the 20-dihyrochaetoglobosin A and cytoglobosin D intermediates. Finally, the cytochrome P450 monooxygenase cheG can catalyze the stereospecific dihydroxylation of prochaetoglobosin I and prochaetoglobosin IV at C-19 and C-20, respectively. The Diels-Alderase cheD may play a role in the post-PKS-NRPS biosynthetic steps catalyzing Diels-Alder cyclization. This chain is Chaetoglobosin A biosynthesis cluster protein C, found in Chaetomium globosum (strain ATCC 6205 / CBS 148.51 / DSM 1962 / NBRC 6347 / NRRL 1970) (Soil fungus).